We begin with the raw amino-acid sequence, 542 residues long: Phosphoacetylglucosamine mutase (542 aa).

Position 1 is an N-acetylmethionine (Met-1). Phosphothreonine is present on Thr-62. Ser-64 functions as the Phosphoserine intermediate in the catalytic mechanism. Mg(2+)-binding residues include Ser-64, Asp-276, Asp-278, and Asp-280. Ser-64 is subject to Phosphoserine. Substrate contacts are provided by residues 370-372 (EAN), 496-500 (RPSGT), and Arg-505.

The protein belongs to the phosphohexose mutase family. Mg(2+) is required as a cofactor.

The enzyme catalyses N-acetyl-alpha-D-glucosamine 1-phosphate = N-acetyl-D-glucosamine 6-phosphate. Its pathway is nucleotide-sugar biosynthesis; UDP-N-acetyl-alpha-D-glucosamine biosynthesis; N-acetyl-alpha-D-glucosamine 1-phosphate from alpha-D-glucosamine 6-phosphate (route I): step 2/2. Catalyzes the conversion of GlcNAc-6-P into GlcNAc-1-P during the synthesis of uridine diphosphate/UDP-GlcNAc, a sugar nucleotide critical to multiple glycosylation pathways including protein N- and O-glycosylation. The sequence is that of Phosphoacetylglucosamine mutase from Mus musculus (Mouse).